The chain runs to 230 residues: Orotidine 5'-phosphate decarboxylase (230 aa).

Substrate-binding positions include D10, K32, 59–68, T119, R180, Q189, G209, and R210; that span reads DLKYHDIPNT. K61 acts as the Proton donor in catalysis.

It belongs to the OMP decarboxylase family. Type 1 subfamily. As to quaternary structure, homodimer.

The catalysed reaction is orotidine 5'-phosphate + H(+) = UMP + CO2. It functions in the pathway pyrimidine metabolism; UMP biosynthesis via de novo pathway; UMP from orotate: step 2/2. Functionally, catalyzes the decarboxylation of orotidine 5'-monophosphate (OMP) to uridine 5'-monophosphate (UMP). In Haemophilus influenzae (strain 86-028NP), this protein is Orotidine 5'-phosphate decarboxylase.